We begin with the raw amino-acid sequence, 242 residues long: Biosynthetic peptidoglycan transglycosylase (242 aa).

The chain crosses the membrane as a helical span at residues 18-38; it reads VIMAVLCIAILYQLWMFSLVV.

Belongs to the glycosyltransferase 51 family.

It localises to the cell inner membrane. The enzyme catalyses [GlcNAc-(1-&gt;4)-Mur2Ac(oyl-L-Ala-gamma-D-Glu-L-Lys-D-Ala-D-Ala)](n)-di-trans,octa-cis-undecaprenyl diphosphate + beta-D-GlcNAc-(1-&gt;4)-Mur2Ac(oyl-L-Ala-gamma-D-Glu-L-Lys-D-Ala-D-Ala)-di-trans,octa-cis-undecaprenyl diphosphate = [GlcNAc-(1-&gt;4)-Mur2Ac(oyl-L-Ala-gamma-D-Glu-L-Lys-D-Ala-D-Ala)](n+1)-di-trans,octa-cis-undecaprenyl diphosphate + di-trans,octa-cis-undecaprenyl diphosphate + H(+). It functions in the pathway cell wall biogenesis; peptidoglycan biosynthesis. Functionally, peptidoglycan polymerase that catalyzes glycan chain elongation from lipid-linked precursors. This chain is Biosynthetic peptidoglycan transglycosylase, found in Bordetella bronchiseptica (strain ATCC BAA-588 / NCTC 13252 / RB50) (Alcaligenes bronchisepticus).